Consider the following 679-residue polypeptide: MDHLLLKTQTQTEQVMNVTNPNSIYIKGRLYFKGYKKIELHCFVDTGASLCIASKFVIPEEHWVNAERPIMVKIADGSSITISKVCKDIDLIIAREIFKIPTVYQQESGIDFIIGNNFCQLYEPFIQFTDRVIFTKNKSYPVHIAKLTRAVRVGTEGFLESMKKRSKTQQPEPVNISTNKIENPLKEIAILSEGRRLSEEKLFITQQRMQKIEELLEKVCSENPLDPNKTKQWMKASIKLSDPSKAIKVKPMKYSPMDREEFDKQIKELLDLKVIKPSKSPHMAPAFLVNNEAEKRRGKKRMVVNYKAMNKATIGDAYNLPNKDELLTLIRGKKIFSSFDCKSGFWQVLLDQESRPLTAFTCPQGHYEWNVVPFGLKQAPSIFQRHMDEAFRVFRKFCCVYVDDILVFSNNEEDHLLHVAMILQKCNQHGIILSKKKAQLFKKKINFLGLEIDEGTHKPQGHILEHINKFPDTLEDKKQLQRFLGILTYASDYIPKLAQIRKPLQAKLKENVPWKWTKEDTLYMQKVKKNLQGFPPLHHPLPEEKLIIETDASDDYWGGMLKAIKINEGTNTELICRYASGSFKAAERNYHSNDKETLAVINTIKKFSIYLTPVHFLIRTDNTHFKSFVNLNYKGDSKLGRNIRWQAWLSHYSFDVEHIKGTDNHFADFLSREFNKVNS.

The tract at residues 40-130 (LHCFVDTGAS…LYEPFIQFTD (91 aa)) is protease. Residue D45 is part of the active site. One can recognise a Reverse transcriptase domain in the interval 272–452 (LKVIKPSKSP…KKINFLGLEI (181 aa)).

Belongs to the caulimoviridae enzymatic polyprotein family.

The catalysed reaction is DNA(n) + a 2'-deoxyribonucleoside 5'-triphosphate = DNA(n+1) + diphosphate. In terms of biological role, encodes for at least two polypeptides: protease (PR) and reverse transcriptase (RT). The protease processes the polyprotein in cis. Reverse transcriptase is multifunctional enzyme that converts the viral RNA genome into dsDNA in viral cytoplasmic capsids. This enzyme displays a DNA polymerase activity that can copy either DNA or RNA templates, and a ribonuclease H (RNase H) activity that cleaves the RNA strand of RNA-DNA heteroduplexes in a partially processive 3'- to 5'-endonucleasic mode. Neo-synthesized pregenomic RNA (pgRNA) are encapsidated, and reverse-transcribed inside the nucleocapsid. Partial (+)DNA is synthesized from the (-)DNA template and generates the relaxed circular DNA (RC-DNA) genome. After budding and infection, the RC-DNA migrates in the nucleus, and is converted into a plasmid-like covalently closed circular DNA (cccDNA). This Cauliflower mosaic virus (strain BBC) (CaMV) protein is Enzymatic polyprotein.